The chain runs to 846 residues: Neurofilament medium polypeptide (846 aa).

Over residues M1–N10 the composition is skewed to polar residues. The tract at residues M1–S52 is disordered. An N-acetylserine modification is found at S2. Residues S2–L104 are head. Low complexity predominate over residues R22–S45. S31 carries the post-translational modification Phosphoserine. An Omega-N-methylarginine modification is found at R43. T48 carries an O-linked (GlcNAc) threonine glycan. The residue at position 98 (S98) is a Phosphoserine. The 312-residue stretch at E100–F411 folds into the IF rod domain. The tract at residues L104 to L135 is coil 1A. Positions R136 to A148 are linker 1. A coil 1B region spans residues Y149–Q247. A Phosphoserine modification is found at S225. Residues I248 to D264 are linker 12. Residues I265–Q286 form a coil 2A region. Positions A287–W290 are linker 2. Residues F291 to F411 form a coil 2B region. Y319 is modified (phosphotyrosine). Phosphoserine occurs at positions 345, 417, and 429. The segment at S412–G845 is tail. The O-linked (GlcNAc) threonine glycan is linked to T431. S467 and S483 each carry phosphoserine. Positions S483 to V783 are disordered. Over residues E489–E499 the composition is skewed to acidic residues. Over residues V500–A510 the composition is skewed to basic and acidic residues. Phosphoserine is present on residues S503 and S507. A compositionally biased stretch (acidic residues) spans K511 to E533. Residues G534–K553 show a composition bias toward basic and acidic residues. A phosphoserine mark is found at S537, S545, S550, and S551. Over residues D554 to A575 the composition is skewed to acidic residues. At T564 the chain carries Phosphothreonine. Residues K576–K603 are compositionally biased toward basic and acidic residues. Phosphoserine is present on residues S604, S609, S643, S667, S687, S713, S721, S751, and S767. 2 stretches are compositionally biased toward basic and acidic residues: residues P610–E675 and S687–E709. 2 stretches are compositionally biased toward basic and acidic residues: residues G718–I730 and T746–G758. The span at A769–V783 shows a compositional bias: basic and acidic residues.

Belongs to the intermediate filament family. As to quaternary structure, forms heterodimers with NEFL; which can further hetero-oligomerize (in vitro). Forms heterodimers with INA (in vitro). There are a number of repeats of the tripeptide K-S-P, NFM is phosphorylated on a number of the serines in this motif. It is thought that phosphorylation of NFM results in the formation of interfilament cross bridges that are important in the maintenance of axonal caliber. Post-translationally, phosphorylation seems to play a major role in the functioning of the larger neurofilament polypeptides (NF-M and NF-H), the levels of phosphorylation being altered developmentally and coincidentally with a change in the neurofilament function. In terms of processing, phosphorylated in the head and rod regions by the PKC kinase PKN1, leading to the inhibition of polymerization. As to expression, expressed in the dorsal root ganglion neurons (at protein level).

The protein localises to the cytoplasm. The protein resides in the cytoskeleton. It is found in the cell projection. It localises to the axon. Neurofilaments usually contain three intermediate filament proteins: NEFL, NEFM, and NEFH which are involved in the maintenance of neuronal caliber. May additionally cooperate with the neuronal intermediate filament proteins PRPH and INA to form neuronal filamentous networks. The chain is Neurofilament medium polypeptide (Nefm) from Rattus norvegicus (Rat).